The primary structure comprises 130 residues: Type VII secretion system extracellular protein C (130 aa).

Belongs to the EsxC family. In terms of assembly, forms both homodimers and heterodimers with EsxA. Homodimerization is calcium-dependent.

The protein localises to the secreted. This Staphylococcus aureus (strain USA300) protein is Type VII secretion system extracellular protein C.